Reading from the N-terminus, the 361-residue chain is Pseudouridine-5'-phosphate glycosidase (361 aa).

The active-site Proton donor is E27. The substrate site is built by K88 and V108. D140 is a Mn(2+) binding site. 142 to 144 (SAD) is a substrate binding site. K161 functions as the Nucleophile in the catalytic mechanism. The interval 306–361 (DRSPTDPAAPDPTAPDPAAPDPTAPDPAAPDSAAPDLAGPDPSAPDPAAVARAHRP) is disordered. Residues 312-333 (PAAPDPTAPDPAAPDPTAPDPA) are compositionally biased toward pro residues. Positions 334 to 354 (APDSAAPDLAGPDPSAPDPAA) are enriched in low complexity.

The protein belongs to the pseudouridine-5'-phosphate glycosidase family. In terms of assembly, homotrimer. It depends on Mn(2+) as a cofactor.

It carries out the reaction D-ribose 5-phosphate + uracil = psi-UMP + H2O. Catalyzes the reversible cleavage of pseudouridine 5'-phosphate (PsiMP) to ribose 5-phosphate and uracil. Functions biologically in the cleavage direction, as part of a pseudouridine degradation pathway. In Frankia alni (strain DSM 45986 / CECT 9034 / ACN14a), this protein is Pseudouridine-5'-phosphate glycosidase.